A 169-amino-acid polypeptide reads, in one-letter code: Large ribosomal subunit protein uL15 (169 aa).

Residues 1–13 (MKLNEIRDNEGAT) show a composition bias toward basic and acidic residues. The segment at 1–40 (MKLNEIRDNEGATKNRMRVGRGIGSGKGKTGGRGVKGQKA) is disordered. Residues 21-35 (RGIGSGKGKTGGRGV) are compositionally biased toward gly residues.

The protein belongs to the universal ribosomal protein uL15 family. As to quaternary structure, part of the 50S ribosomal subunit.

In terms of biological role, binds to the 23S rRNA. The polypeptide is Large ribosomal subunit protein uL15 (Methylorubrum populi (strain ATCC BAA-705 / NCIMB 13946 / BJ001) (Methylobacterium populi)).